The sequence spans 361 residues: Protein-L-isoaspartate O-methyltransferase domain-containing protein 2 (361 aa).

Glycine 2 is lipidated: N-myristoyl glycine. The active site involves serine 64. AdoMet binding motif regions lie at residues 85–94 (LNLGSGTGYL), 160–164 (YDRVY), and 181–191 (LKVGGILVMPL). Residues 240-250 (VRSLQDLARIA) are BC-box. Over residues 303–312 (SNPSDDNSSG) the composition is skewed to polar residues. Residues 303–335 (SNPSDDNSSGDLEEERREEEATTPPDAKPEPPV) are disordered. The interval 345–348 (LPLP) is CUL-box.

This sequence belongs to the methyltransferase superfamily. L-isoaspartyl/D-aspartyl protein methyltransferase family.

The protein localises to the cytoplasm. In terms of biological role, may act as a substrate recognition component of an ECS (Elongin BC-CUL5-SOCS-box protein) E3 ubiquitin ligase complex which mediates the ubiquitination and subsequent proteasomal degradation of target proteins. May bind to the methyltransferase cofactor S-adenosylmethionine (AdoMet) via the N-terminal AdoMet binding motif, but probably does not display methyltransferase activity. This chain is Protein-L-isoaspartate O-methyltransferase domain-containing protein 2 (PCMTD2), found in Bos taurus (Bovine).